Reading from the N-terminus, the 634-residue chain is Factor of DNA methylation 5 (634 aa).

Residues Ile254 to Lys469 adopt a coiled-coil conformation.

In terms of biological role, acts in association with FDM3 and FDM4 for RNA-directed DNA methylation (RdDM). This is Factor of DNA methylation 5 from Arabidopsis thaliana (Mouse-ear cress).